Reading from the N-terminus, the 447-residue chain is Argininosuccinate synthase (447 aa).

ATP contacts are provided by residues 20–28 and Ala-46; that span reads AFSGGLDTS. Tyr-102 serves as a coordination point for L-citrulline. Gly-132 and Thr-134 together coordinate ATP. Thr-134, Asn-138, and Asp-139 together coordinate L-aspartate. Residue Asn-138 participates in L-citrulline binding. An ATP-binding site is contributed by Asp-139. Arg-142 and Ser-195 together coordinate L-citrulline. Asp-197 contacts ATP. 3 residues coordinate L-citrulline: Thr-204, Glu-206, and Glu-283.

Belongs to the argininosuccinate synthase family. Type 2 subfamily. As to quaternary structure, homotetramer.

It is found in the cytoplasm. The enzyme catalyses L-citrulline + L-aspartate + ATP = 2-(N(omega)-L-arginino)succinate + AMP + diphosphate + H(+). It participates in amino-acid biosynthesis; L-arginine biosynthesis; L-arginine from L-ornithine and carbamoyl phosphate: step 2/3. In Neisseria meningitidis serogroup C (strain 053442), this protein is Argininosuccinate synthase.